Consider the following 500-residue polypeptide: Maturase K (500 aa).

The protein belongs to the intron maturase 2 family. MatK subfamily.

It is found in the plastid. Its subcellular location is the chloroplast. Its function is as follows. Usually encoded in the trnK tRNA gene intron. Probably assists in splicing its own and other chloroplast group II introns. This chain is Maturase K, found in Adiantum capillus-veneris (Maidenhair fern).